The chain runs to 208 residues: Large ribosomal subunit protein uL3 (208 aa).

N5-methylglutamine is present on Q149.

It belongs to the universal ribosomal protein uL3 family. Part of the 50S ribosomal subunit. Forms a cluster with proteins L14 and L19. Post-translationally, methylated by PrmB.

Functionally, one of the primary rRNA binding proteins, it binds directly near the 3'-end of the 23S rRNA, where it nucleates assembly of the 50S subunit. In Haemophilus influenzae (strain PittGG), this protein is Large ribosomal subunit protein uL3.